The chain runs to 391 residues: Phosphoglycerate kinase (391 aa).

Residues 21–23 (DLN), Arg36, 59–62 (HRGR), Arg113, and Arg146 each bind substrate. ATP-binding positions include Lys197, Glu314, and 340–343 (GGDT).

Belongs to the phosphoglycerate kinase family. Monomer.

It localises to the cytoplasm. The enzyme catalyses (2R)-3-phosphoglycerate + ATP = (2R)-3-phospho-glyceroyl phosphate + ADP. It functions in the pathway carbohydrate degradation; glycolysis; pyruvate from D-glyceraldehyde 3-phosphate: step 2/5. In Ruthia magnifica subsp. Calyptogena magnifica, this protein is Phosphoglycerate kinase.